We begin with the raw amino-acid sequence, 609 residues long: Dihydroxy-acid dehydratase (609 aa).

Mg(2+) is bound at residue D81. [2Fe-2S] cluster is bound at residue C122. Residues D123 and K124 each coordinate Mg(2+). K124 carries the post-translational modification N6-carboxylysine. Residue C195 coordinates [2Fe-2S] cluster. E491 provides a ligand contact to Mg(2+). Catalysis depends on S517, which acts as the Proton acceptor.

The protein belongs to the IlvD/Edd family. As to quaternary structure, homodimer. [2Fe-2S] cluster is required as a cofactor. Requires Mg(2+) as cofactor.

The catalysed reaction is (2R)-2,3-dihydroxy-3-methylbutanoate = 3-methyl-2-oxobutanoate + H2O. It catalyses the reaction (2R,3R)-2,3-dihydroxy-3-methylpentanoate = (S)-3-methyl-2-oxopentanoate + H2O. It participates in amino-acid biosynthesis; L-isoleucine biosynthesis; L-isoleucine from 2-oxobutanoate: step 3/4. It functions in the pathway amino-acid biosynthesis; L-valine biosynthesis; L-valine from pyruvate: step 3/4. Functionally, functions in the biosynthesis of branched-chain amino acids. Catalyzes the dehydration of (2R,3R)-2,3-dihydroxy-3-methylpentanoate (2,3-dihydroxy-3-methylvalerate) into 2-oxo-3-methylpentanoate (2-oxo-3-methylvalerate) and of (2R)-2,3-dihydroxy-3-methylbutanoate (2,3-dihydroxyisovalerate) into 2-oxo-3-methylbutanoate (2-oxoisovalerate), the penultimate precursor to L-isoleucine and L-valine, respectively. The sequence is that of Dihydroxy-acid dehydratase from Acinetobacter baumannii (strain AB307-0294).